The primary structure comprises 206 residues: Two-component response regulator ARR7 (206 aa).

One can recognise a Response regulatory domain in the interval 25 to 152 (HVLAVDDSIV…DVKRIKQLIM (128 aa)). Asp-85 is modified (4-aspartylphosphate). Residues 165–206 (SNKRKLQEDSDTSSSSHDDTSIKDSSCSKRMKSESENLFSLL) are disordered.

Belongs to the ARR family. Type-A subfamily. Post-translationally, two-component system major event consists of a His-to-Asp phosphorelay between a sensor histidine kinase (HK) and a response regulator (RR). In plants, the His-to-Asp phosphorelay involves an additional intermediate named Histidine-containing phosphotransfer protein (HPt). This multistep phosphorelay consists of a His-Asp-His-Asp sequential transfer of a phosphate group between first a His and an Asp of the HK protein, followed by the transfer to a conserved His of the HPt protein and finally the transfer to an Asp in the receiver domain of the RR protein. As to expression, predominantly expressed in roots and young flowers.

The protein localises to the nucleus. In terms of biological role, functions as a response regulator involved in His-to-Asp phosphorelay signal transduction system. Phosphorylation of the Asp residue in the receiver domain activates the ability of the protein to promote the transcription of target genes. Type-A response regulators seem to act as negative regulators of the cytokinin signaling. This Arabidopsis thaliana (Mouse-ear cress) protein is Two-component response regulator ARR7 (ARR7).